Here is a 144-residue protein sequence, read N- to C-terminus: Large ribosomal subunit protein uL15 (144 aa).

The tract at residues 1-59 is disordered; the sequence is MRLNTISPAEGSKPTGKRSGRGIGSGLGKTGGVGHKGQKSRSGGRVKPGFEGGQMPIQR. A compositionally biased stretch (gly residues) spans 21-35; sequence RGIGSGLGKTGGVGH.

It belongs to the universal ribosomal protein uL15 family. Part of the 50S ribosomal subunit.

In terms of biological role, binds to the 23S rRNA. In Alteromonas mediterranea (strain DSM 17117 / CIP 110805 / LMG 28347 / Deep ecotype), this protein is Large ribosomal subunit protein uL15.